Here is a 200-residue protein sequence, read N- to C-terminus: NADH-quinone oxidoreductase subunit I (200 aa).

2 consecutive 4Fe-4S ferredoxin-type domains span residues 73-102 (RLLE…METT) and 112-141 (LNYS…HGGD). Residues cysteine 82, cysteine 85, cysteine 88, cysteine 92, cysteine 121, cysteine 124, cysteine 127, and cysteine 131 each coordinate [4Fe-4S] cluster.

Belongs to the complex I 23 kDa subunit family. In terms of assembly, NDH-1 is composed of 14 different subunits. Subunits NuoA, H, J, K, L, M, N constitute the membrane sector of the complex. [4Fe-4S] cluster is required as a cofactor.

Its subcellular location is the cell inner membrane. It catalyses the reaction a quinone + NADH + 5 H(+)(in) = a quinol + NAD(+) + 4 H(+)(out). In terms of biological role, NDH-1 shuttles electrons from NADH, via FMN and iron-sulfur (Fe-S) centers, to quinones in the respiratory chain. The immediate electron acceptor for the enzyme in this species is believed to be ubiquinone. Couples the redox reaction to proton translocation (for every two electrons transferred, four hydrogen ions are translocated across the cytoplasmic membrane), and thus conserves the redox energy in a proton gradient. The chain is NADH-quinone oxidoreductase subunit I from Campylobacter hominis (strain ATCC BAA-381 / DSM 21671 / CCUG 45161 / LMG 19568 / NCTC 13146 / CH001A).